Here is a 257-residue protein sequence, read N- to C-terminus: Imidazole glycerol phosphate synthase subunit HisF (257 aa).

Catalysis depends on residues Asp11 and Asp130.

This sequence belongs to the HisA/HisF family. In terms of assembly, heterodimer of HisH and HisF.

The protein resides in the cytoplasm. The catalysed reaction is 5-[(5-phospho-1-deoxy-D-ribulos-1-ylimino)methylamino]-1-(5-phospho-beta-D-ribosyl)imidazole-4-carboxamide + L-glutamine = D-erythro-1-(imidazol-4-yl)glycerol 3-phosphate + 5-amino-1-(5-phospho-beta-D-ribosyl)imidazole-4-carboxamide + L-glutamate + H(+). It participates in amino-acid biosynthesis; L-histidine biosynthesis; L-histidine from 5-phospho-alpha-D-ribose 1-diphosphate: step 5/9. In terms of biological role, IGPS catalyzes the conversion of PRFAR and glutamine to IGP, AICAR and glutamate. The HisF subunit catalyzes the cyclization activity that produces IGP and AICAR from PRFAR using the ammonia provided by the HisH subunit. This chain is Imidazole glycerol phosphate synthase subunit HisF, found in Proteus mirabilis (strain HI4320).